Here is a 60-residue protein sequence, read N- to C-terminus: Large ribosomal subunit protein uL29 (60 aa).

It belongs to the universal ribosomal protein uL29 family.

The chain is Large ribosomal subunit protein uL29 from Fusobacterium nucleatum subsp. nucleatum (strain ATCC 25586 / DSM 15643 / BCRC 10681 / CIP 101130 / JCM 8532 / KCTC 2640 / LMG 13131 / VPI 4355).